The primary structure comprises 171 residues: MAGGSTNTKKIEMSLAEELVPKSQEPSREQVLIAEMLEHGIRSLGASQSRQKLDSKISDSAAAWNLAANKSKKTGPQLPPKKASQEPNQEGGFQGMGFLYERNLGADVIAEIGLEELNGLEMEIMRRQLQVITGRLRALEDQGATWRHRETLFFTMLVSVCVANLWLWLRQ.

Disordered regions lie at residues 1-27 and 68-92; these read MAGGSTNTKKIEMSLAEELVPKSQEPS and ANKSKKTGPQLPPKKASQEPNQEGG. Residues 151-169 form a helical membrane-spanning segment; that stretch reads TLFFTMLVSVCVANLWLWL.

Interacts with BIK and RNF183. Interacts with IMMT/MIC60and EMD.

The protein resides in the mitochondrion. It is found in the mitochondrion outer membrane. The protein localises to the endoplasmic reticulum membrane. Functionally, involved in the regulation of endoplasmic reticulum (ER)-mitochondria coupling. Negatively regulates the ER-mitochondria distance and Ca(2+) transfer from ER to mitochondria possibly implicating it in the regulation of apoptosis. May collaborate with RNF183 to restrain BIK protein levels thus regulating apoptotic signaling. The polypeptide is Fetal and adult testis-expressed transcript protein homolog (FATE1) (Sus scrofa (Pig)).